The sequence spans 351 residues: Uroporphyrinogen decarboxylase (351 aa).

Substrate is bound by residues 25-29 (RQAGR), Phe43, Asp74, Tyr151, Ser206, and His325.

This sequence belongs to the uroporphyrinogen decarboxylase family. Homodimer.

It localises to the cytoplasm. It carries out the reaction uroporphyrinogen III + 4 H(+) = coproporphyrinogen III + 4 CO2. It participates in porphyrin-containing compound metabolism; protoporphyrin-IX biosynthesis; coproporphyrinogen-III from 5-aminolevulinate: step 4/4. Its function is as follows. Catalyzes the decarboxylation of four acetate groups of uroporphyrinogen-III to yield coproporphyrinogen-III. This chain is Uroporphyrinogen decarboxylase, found in Chlorobaculum tepidum (strain ATCC 49652 / DSM 12025 / NBRC 103806 / TLS) (Chlorobium tepidum).